We begin with the raw amino-acid sequence, 457 residues long: Cysteine desulfurase (457 aa).

Ala127, Thr128, Gln235, Ser255, and His257 together coordinate pyridoxal 5'-phosphate. Position 258 is an N6-(pyridoxal phosphate)lysine (Lys258). Thr295 is a binding site for pyridoxal 5'-phosphate. Cys381 acts as the Cysteine persulfide intermediate in catalysis. Position 381 (Cys381) interacts with [2Fe-2S] cluster. Cys381 lines the Zn(2+) pocket. Cys381 bears the Cysteine persulfide mark.

Belongs to the class-V pyridoxal-phosphate-dependent aminotransferase family. NifS/IscS subfamily. As to quaternary structure, homodimer. Component of the mitochondrial core iron-sulfur cluster (ISC) complex composed of NFS1, LYRM4, NDUFAB1, ISCU, FXN, and FDX2; this complex is a heterohexamer containing two copies of each monomer. Component of cyteine desulfurase complex composed of NFS1, LYRM4 and NDUFAB1; this complex contributes to the activation of cysteine desulfurase activity and NFS1 stabilization. Interacts (homodimer form) with ISCU (D-state); each monomer interacts with the C-terminal regions of each NFS1 monomer. Interacts with HSPA9. Interacts (via homodimer form) with FDX2. Interacts (via homodimer form) with FXN. Interacts with LYRM4. Component of a complex composed of FXN, NFS1, LYRM4 and ISCU. In terms of assembly, monomer. Homodimer. Oligomer. Interacts with ISCU. Component of the cysteine desulfurase complex composed of NFS1 and LYRM4; this complex contributes to the activation of cysteine desulfurase activity. Interacts with MOCS3. Pyridoxal 5'-phosphate is required as a cofactor. Post-translationally, N-gluconoylated. Cysteine persulfide intermediate is reduced by thiol-containing molecules like glutathione and L-cysteine. Persulfide reduction is a rate-limiting step of cysteine desulfurase catalytic cycle.

Its subcellular location is the mitochondrion. The protein resides in the cytoplasm. It localises to the nucleus. The protein localises to the cytoskeleton. It is found in the microtubule organizing center. Its subcellular location is the centrosome. The catalysed reaction is (sulfur carrier)-H + L-cysteine = (sulfur carrier)-SH + L-alanine. The enzyme catalyses L-cysteinyl-[cysteine desulfurase] + L-cysteine = S-sulfanyl-L-cysteinyl-[cysteine desulfurase] + L-alanine. With respect to regulation, active only in complex with LYRM4. Cysteine desulfurase, of the core iron-sulfur cluster (ISC) assembly complex, that catalyzes the desulfuration of L-cysteine to L-alanine, as component of the cysteine desulfurase complex leading to the formation of a cysteine persulfide intermediate at the active site cysteine residue and participates in the [2Fe-2S] clusters assembly on the scaffolding protein ISCU. The persulfide is then transferred on the flexible Cys loop from the catalytic site of NFS1 to the surface of NFS1. After the NFS1-linked persulfide sulfur is transferred to one of the conserved Cys residues of the scaffold, a reaction assisted by FXN. The core iron-sulfur cluster (ISC) assembly complex is involved in the de novo synthesis of a [2Fe-2S] cluster, the first step of the mitochondrial iron-sulfur protein biogenesis. This process is initiated by the cysteine desulfurase complex (NFS1:LYRM4:NDUFAB1) that produces persulfide which is delivered on the scaffold protein ISCU in a FXN-dependent manner. Then this complex is stabilized by FDX2 which provides reducing equivalents to accomplish the [2Fe-2S] cluster assembly. Finally, the [2Fe-2S] cluster is transferred from ISCU to chaperone proteins, including HSCB, HSPA9 and GLRX5. In terms of biological role, may catalyze the desulfuration of L-cysteine to L-alanine as component of the cysteine desulfurase complex (NFS1:LYRM4), leading to the formation of a cysteine persulfide intermediate. Acts as a sulfur donor for MOCS3 by transferring the sulfur of the cysteine persulfide intermediate on MOCS3. This Pongo abelii (Sumatran orangutan) protein is Cysteine desulfurase.